The following is a 186-amino-acid chain: TATA box-binding protein-like 1 (186 aa).

This sequence belongs to the TBP family. Binds TFIIA and TFIIB.

The protein resides in the cytoplasm. The protein localises to the nucleus. In terms of biological role, part of a specialized transcription system that mediates the transcription of most ribosomal proteins through the 5'-TCT-3' motif which is a core promoter element at these genes. Seems to also mediate the transcription of NF1. Does not bind the TATA box. In Bos taurus (Bovine), this protein is TATA box-binding protein-like 1 (TBPL1).